The chain runs to 30 residues: Snaclec coagulation factor IX/factor X-binding protein subunit B (30 aa).

A disulfide bridge connects residues cysteine 2 and cysteine 13. The C-type lectin domain occupies 9–30 (YEGHCYRVFTEPQNWADAEKFC).

This sequence belongs to the snaclec family. As to quaternary structure, heterodimer of subunits A and B; disulfide-linked. Glycosylated. In terms of tissue distribution, expressed by the venom gland.

The protein localises to the secreted. Functionally, anticoagulant protein which binds to the gamma-carboxyglutamic acid-domain regions of factors IX (F9) and factor X (F10) in the presence of calcium with a 1 to 1 stoichiometry. The sequence is that of Snaclec coagulation factor IX/factor X-binding protein subunit B from Bothrops jararaca (Jararaca).